A 213-amino-acid polypeptide reads, in one-letter code: High frequency lysogenization protein HflD homolog (213 aa).

Residues 79–122 are a coiled coil; it reads QGLNAELTRYTLSLMVLERKLSSAKGALNTLGDRINGLQRQLDH.

The protein belongs to the HflD family.

It is found in the cytoplasm. The protein resides in the cell inner membrane. This is High frequency lysogenization protein HflD homolog from Salmonella typhi.